The following is a 180-amino-acid chain: Small ribosomal subunit protein uS4 (180 aa).

The region spanning 102–174 (RRLQTMLVRK…PARKLEQKEE (73 aa)) is the S4 RNA-binding domain. Residues 154–180 (VPFSPLANPEHPARKLEQKEETNEESA) are disordered. Over residues 164–174 (HPARKLEQKEE) the composition is skewed to basic and acidic residues.

The protein belongs to the universal ribosomal protein uS4 family. In terms of assembly, part of the 30S ribosomal subunit. Contacts protein S5. The interaction surface between S4 and S5 is involved in control of translational fidelity.

Functionally, one of the primary rRNA binding proteins, it binds directly to 16S rRNA where it nucleates assembly of the body of the 30S subunit. Its function is as follows. With S5 and S12 plays an important role in translational accuracy. This is Small ribosomal subunit protein uS4 from Nanoarchaeum equitans (strain Kin4-M).